The sequence spans 144 residues: Transcriptional regulator SlyA (144 aa).

The HTH marR-type domain maps to 2 to 135 (ESPLGSDLAR…LITLIAKLEH (134 aa)). Positions 49-72 (QIQLAKAIGIEQPSLVRTLDQLEE) form a DNA-binding region, H-T-H motif.

It belongs to the SlyA family. In terms of assembly, homodimer.

Functionally, transcription regulator that can specifically activate or repress expression of target genes. The protein is Transcriptional regulator SlyA of Escherichia coli (strain 55989 / EAEC).